We begin with the raw amino-acid sequence, 30 residues long: uncharacterized protein (30 aa).

A helical membrane pass occupies residues 9 to 26 (YRLVIIVLISVYYRYRFF).

The protein localises to the plastid. It localises to the chloroplast membrane. This is an uncharacterized protein from Marchantia polymorpha (Common liverwort).